We begin with the raw amino-acid sequence, 491 residues long: MNFVVPDFYPATAEIFVAVMALVIMLATTFARSVARGLAYGLTLVTLIGAAIITYNTANPRAVTTFSNMFIGDLLGDVLKLLIYFSMAVALLYGRSYLADRKLDKPEYYVLALLMTLGMMVMVTSNHLLSMYIGLELMSLSLYALVAFDRDSARGTEAAMKYFVLGALASGLLLYGMSMLYGATGTLEISGIAKSVYNQAANDTVLLFGLVFLMAGICFKLGVVPFHMWIPDVYHGANTAVTLIIATAPKLAAFAMAVRLLVWGLFDVAEHWQTMLMFVAVLSIVLGNLAAIAQTNLKRMLAYSGISHMGFMLLGLLSGVVDGDPHYALDAYSAAMFYAISYVIMSLASFGMIILLSRAGFEAENIDDFKGLNKRSPWFAAMMMFVMFSMAGIPFFIGFFAKLAVLQAVVAAGYIWVAVVAVLMSVIGAFYYLRLVKVMYFDEPADATPIQAPAELRVFLSANGLAIAAIGLAPQGVMTLCTFVLLASTQP.

14 consecutive transmembrane segments (helical) span residues Ala11–Ala31, Leu38–Ala58, Leu74–Gly94, Pro106–Asn126, Leu128–Phe148, Phe163–Ala183, Leu206–Phe226, Leu243–Trp263, Trp272–Ile292, Leu301–Val321, Met336–Leu356, Phe379–Phe399, Val410–Phe430, and Leu465–Leu485.

Belongs to the complex I subunit 2 family. NDH-1 is composed of 14 different subunits. Subunits NuoA, H, J, K, L, M, N constitute the membrane sector of the complex.

The protein localises to the cell inner membrane. It carries out the reaction a quinone + NADH + 5 H(+)(in) = a quinol + NAD(+) + 4 H(+)(out). NDH-1 shuttles electrons from NADH, via FMN and iron-sulfur (Fe-S) centers, to quinones in the respiratory chain. The immediate electron acceptor for the enzyme in this species is believed to be ubiquinone. Couples the redox reaction to proton translocation (for every two electrons transferred, four hydrogen ions are translocated across the cytoplasmic membrane), and thus conserves the redox energy in a proton gradient. This chain is NADH-quinone oxidoreductase subunit N, found in Azoarcus sp. (strain BH72).